Reading from the N-terminus, the 780-residue chain is 5-methyltetrahydropteroyltriglutamate--homocysteine methyltransferase (780 aa).

Residues 15 to 18 (RELK) and Lys-114 contribute to the 5-methyltetrahydropteroyltri-L-glutamate site. Residues 457–459 (IGS) and Glu-510 each bind L-homocysteine. L-methionine is bound by residues 457–459 (IGS) and Glu-510. Residues 541 to 542 (RC) and Trp-587 contribute to the 5-methyltetrahydropteroyltri-L-glutamate site. Asp-625 provides a ligand contact to L-homocysteine. Asp-625 provides a ligand contact to L-methionine. Glu-631 lines the 5-methyltetrahydropteroyltri-L-glutamate pocket. The Zn(2+) site is built by His-667, Cys-669, and Glu-691. The active-site Proton donor is His-720. A Zn(2+)-binding site is contributed by Cys-752.

The protein belongs to the vitamin-B12 independent methionine synthase family. It depends on Zn(2+) as a cofactor.

It carries out the reaction 5-methyltetrahydropteroyltri-L-glutamate + L-homocysteine = tetrahydropteroyltri-L-glutamate + L-methionine. It participates in amino-acid biosynthesis; L-methionine biosynthesis via de novo pathway; L-methionine from L-homocysteine (MetE route): step 1/1. Its function is as follows. Catalyzes the transfer of a methyl group from 5-methyltetrahydrofolate to homocysteine resulting in methionine formation. This Nitratidesulfovibrio vulgaris (strain DSM 19637 / Miyazaki F) (Desulfovibrio vulgaris) protein is 5-methyltetrahydropteroyltriglutamate--homocysteine methyltransferase.